Reading from the N-terminus, the 152-residue chain is Xanthine-guanine phosphoribosyltransferase (152 aa).

5-phospho-alpha-D-ribose 1-diphosphate contacts are provided by residues 37-38, arginine 69, and 88-96; these read RG and DDLVDTGGT. Arginine 69 contributes to the GMP binding site. Aspartate 89 is a Mg(2+) binding site. Residues aspartate 92 and isoleucine 135 each coordinate guanine. Positions 92 and 135 each coordinate xanthine. Residues 92-96 and 134-135 each bind GMP; these read DTGGT and WI.

The protein belongs to the purine/pyrimidine phosphoribosyltransferase family. XGPT subfamily. Homotetramer. It depends on Mg(2+) as a cofactor.

Its subcellular location is the cell inner membrane. It carries out the reaction GMP + diphosphate = guanine + 5-phospho-alpha-D-ribose 1-diphosphate. The enzyme catalyses XMP + diphosphate = xanthine + 5-phospho-alpha-D-ribose 1-diphosphate. It catalyses the reaction IMP + diphosphate = hypoxanthine + 5-phospho-alpha-D-ribose 1-diphosphate. It participates in purine metabolism; GMP biosynthesis via salvage pathway; GMP from guanine: step 1/1. Its pathway is purine metabolism; XMP biosynthesis via salvage pathway; XMP from xanthine: step 1/1. Its function is as follows. Purine salvage pathway enzyme that catalyzes the transfer of the ribosyl-5-phosphate group from 5-phospho-alpha-D-ribose 1-diphosphate (PRPP) to the N9 position of the 6-oxopurines guanine and xanthine to form the corresponding ribonucleotides GMP (guanosine 5'-monophosphate) and XMP (xanthosine 5'-monophosphate), with the release of PPi. To a lesser extent, also acts on hypoxanthine. The sequence is that of Xanthine-guanine phosphoribosyltransferase from Edwardsiella ictaluri (strain 93-146).